We begin with the raw amino-acid sequence, 272 residues long: Acidic leucine-rich nuclear phosphoprotein 32 family member B (272 aa).

LRR repeat units lie at residues 16 to 40 (PAAVQELVLDNCKANDGKIEGLTDE), 43 to 64 (NLEFLSLINVGLFSVSDLPKLP), 65 to 84 (KLKKLELSENRIFGGLDRLA), and 89 to 110 (SLTHLNLSGNNLKDISTLEPLK). The LRRCT domain maps to 123–161 (CEVTNRSDYRETVFRLLPQLSYLDGYDREDQEAPDSDVE). Residues 149–254 (DREDQEAPDS…DEDEDEEEEE (106 aa)) show a composition bias toward acidic residues. The tract at residues 149 to 272 (DREDQEAPDS…RETDDEGEDD (124 aa)) is disordered. Residues Ser164 and Ser171 each carry the phosphoserine modification. Basic and acidic residues predominate over residues 255-265 (SGKGEKRKRET). Positions 260 to 263 (KRKR) match the Nuclear localization signal motif. Thr265 is modified (phosphothreonine).

The protein belongs to the ANP32 family. In terms of assembly, interacts with histones H3 and H4. Interacts with KLF5; this interaction induces promoter region-specific histone incorporation and inhibition of histone acetylation by ANP32B. Post-translationally, some glutamate residues are glycylated by TTLL8. This modification occurs exclusively on glutamate residues and results in a glycine chain on the gamma-carboxyl group. Directly cleaved by caspase-3/CASP3. Predominantly expressed in brain. Expressed in the entire embryonic brain, whereas in the adult brain its expression is restricted to the subventricular zone where there are neural progenitor cells.

Its subcellular location is the nucleus. Functionally, multifunctional protein that is involved in the regulation of many processes including cell proliferation, apoptosis, cell cycle progression or transcription. Regulates the proliferation of neuronal stem cells, differentiation of leukemic cells and progression from G1 to S phase of the cell cycle. As negative regulator of caspase-3-dependent apoptosis, may act as an antagonist of ANP32A in regulating tissue homeostasis. Exhibits histone chaperone properties, able to recruit histones to certain promoters, thus regulating the transcription of specific genes. Also plays an essential role in the nucleocytoplasmic transport of specific mRNAs via the uncommon nuclear mRNA export receptor XPO1/CRM1. Participates in the regulation of adequate adaptive immune responses by acting on mRNA expression and cell proliferation. This chain is Acidic leucine-rich nuclear phosphoprotein 32 family member B (Anp32b), found in Rattus norvegicus (Rat).